The chain runs to 413 residues: Serine/threonine-protein phosphatase 7 (413 aa).

Cysteines 28 and 67 form a disulfide. Mn(2+)-binding residues include D84, H86, D113, and N145. Catalysis depends on H146, which acts as the Proton donor. Residues H197 and H303 each contribute to the Mn(2+) site. Residues 391–413 (NVIDSDDEMDKSAMDTNNEQPNS) form a disordered region. Positions 404–413 (MDTNNEQPNS) are enriched in polar residues.

The protein belongs to the PPP phosphatase family. PP-7 subfamily. Monomer, homodimer, and heteromer. Interacts with calmodulin (CaM3 and CaM4) and HSFA1A/HSF1. It depends on Mn(2+) as a cofactor. Expressed in leaves, and, to a lower extent, in stems and flowers.

The protein resides in the nucleus. It is found in the nucleoplasm. The catalysed reaction is O-phospho-L-seryl-[protein] + H2O = L-seryl-[protein] + phosphate. It catalyses the reaction O-phospho-L-threonyl-[protein] + H2O = L-threonyl-[protein] + phosphate. Its activity is regulated as follows. Inhibited by NaF and orthovanadate, as well as by divalent cations such as Ni(2+) and Zn(2+). Inhibited by polylysine with myelin basic protein as substrate, but activated by polylysine with pNPP as substrate. Reversibly regulated by redox agents. Inhibited by submillimolar Pi concentrations. Slightly repressed by calmodulin (CaM). Its function is as follows. Phosphatase active on para-nitrophenylphosphate (pNPP) and on various phosphoproteins such as myelin basic protein. Seems to act as a positive regulator of cryptochrome signaling involved in hypocotyl growth inhibition and cotyledon expansion under white and blue light conditions. Confers thermotolerance. Required for heat shock mediated-signaling pathway that leads to the expression of heat shock proteins (HSPs). The protein is Serine/threonine-protein phosphatase 7 (PP7) of Arabidopsis thaliana (Mouse-ear cress).